We begin with the raw amino-acid sequence, 201 residues long: MGNASENFDIEDLMSYGDDLINLLNVKNGFDIISQSSEQFKALNFACHEDFNQIQGSIEDCKTKLYACKKKTEEAYSDIAAEDEIERLQKELDEEMEREFKLKDELRLVADELKDLNAQLSSIDEHKQSTKRKVRDDLRAEKKLSMYASVTNVIPDIDDPSKISGYMVDREKRLIEKFQFETNKMTAYETCNSIWSIINKQ.

Positions 78–133 form a coiled coil; it reads DIAAEDEIERLQKELDEEMEREFKLKDELRLVADELKDLNAQLSSIDEHKQSTKRK.

The protein belongs to the SPC24 family. In terms of assembly, component of the NDC80 complex, which consists of NDC80, NUF2, SPC24 and SPC25. Highly expressed in actively dividing tissues, such as shoot apical meristem (SAM), root apical meristem (RAM), vasculature, newly emerging leaves and inflorescence shoots.

The protein localises to the chromosome. The protein resides in the centromere. Functionally, acts as a component of the essential kinetochore-associated NDC80 complex, which is required for chromosome segregation and spindle checkpoint activity to ensure proper cell division. Required for the maintenance of plant architecture. In Arabidopsis thaliana (Mouse-ear cress), this protein is Kinetochore protein SPC24 homolog.